Here is a 504-residue protein sequence, read N- to C-terminus: L-amino-acid oxidase (504 aa).

A signal peptide spans 1 to 18; it reads MNIFFMFSLLFLATLGSC. Cysteines 28 and 191 form a disulfide. FAD contacts are provided by residues 61–62, 81–82, Arg-89, and 105–108; these read MS, EA, and GPMR. Arg-108 provides a ligand contact to substrate. An N-linked (GlcNAc...) asparagine glycan is attached at Asn-190. Substrate is bound at residue His-241. Residue Val-279 coordinates FAD. Cys-349 and Cys-430 are oxidised to a cystine. Asn-379 carries an N-linked (GlcNAc...) asparagine glycan. Residue Tyr-390 coordinates substrate. FAD is bound by residues Glu-475 and 482–487; that span reads GWIDST. 482–483 contributes to the substrate binding site; it reads GW.

Belongs to the flavin monoamine oxidase family. FIG1 subfamily. In terms of assembly, homodimer; non-covalently linked. The cofactor is FAD. As to expression, expressed by the venom gland.

The protein localises to the secreted. It carries out the reaction an L-alpha-amino acid + O2 + H2O = a 2-oxocarboxylate + H2O2 + NH4(+). Functionally, catalyzes an oxidative deamination of predominantly hydrophobic and aromatic L-amino acids, thus producing hydrogen peroxide that may contribute to the diverse toxic effects of this enzyme. Exhibits diverse biological activities, such as hemorrhage, hemolysis, edema, apoptosis of vascular endothelial cells or tumor cell lines, antibacterial and antiparasitic activities, as well as regulation of platelet aggregation. Its effect on platelets is controversial, since it either induces aggregation or inhibits agonist-induced aggregation. These different effects are probably due to different experimental conditions. In Echis ocellatus (Ocellated saw-scaled viper), this protein is L-amino-acid oxidase.